A 112-amino-acid chain; its full sequence is Small ribosomal subunit protein bS6 (112 aa).

It belongs to the bacterial ribosomal protein bS6 family.

Binds together with bS18 to 16S ribosomal RNA. The chain is Small ribosomal subunit protein bS6 from Hyphomonas neptunium (strain ATCC 15444).